A 387-amino-acid polypeptide reads, in one-letter code: Succinate--CoA ligase [ADP-forming] subunit beta (387 aa).

The ATP-grasp domain occupies 9–244 (KQLFAEYGIP…KTQEDETEVL (236 aa)). ATP is bound by residues Lys-46, 53–55 (GRG), Gly-102, and Glu-107. Mg(2+)-binding residues include Asn-199 and Asp-213. Substrate contacts are provided by residues Asn-264 and 321–323 (GIV).

It belongs to the succinate/malate CoA ligase beta subunit family. In terms of assembly, heterotetramer of two alpha and two beta subunits. Mg(2+) serves as cofactor.

The enzyme catalyses succinate + ATP + CoA = succinyl-CoA + ADP + phosphate. It catalyses the reaction GTP + succinate + CoA = succinyl-CoA + GDP + phosphate. It participates in carbohydrate metabolism; tricarboxylic acid cycle; succinate from succinyl-CoA (ligase route): step 1/1. Its function is as follows. Succinyl-CoA synthetase functions in the citric acid cycle (TCA), coupling the hydrolysis of succinyl-CoA to the synthesis of either ATP or GTP and thus represents the only step of substrate-level phosphorylation in the TCA. The beta subunit provides nucleotide specificity of the enzyme and binds the substrate succinate, while the binding sites for coenzyme A and phosphate are found in the alpha subunit. The sequence is that of Succinate--CoA ligase [ADP-forming] subunit beta from Xylella fastidiosa (strain 9a5c).